Reading from the N-terminus, the 59-residue chain is Salivary thrombin inhibitor XC-43 (59 aa).

A signal peptide spans 1–23; that stretch reads MNLQFLFIFIAFCVMLFAQIVTA.

As to quaternary structure, interacts with human F2 (thrombin). In terms of tissue distribution, salivary gland (at protein level).

Its subcellular location is the secreted. Anticoagulant protein that acts as a competitive inhibitor of host thrombin. Inhibits thrombin-mediated host platelet aggregation. In Xenopsylla cheopis (Oriental rat flea), this protein is Salivary thrombin inhibitor XC-43.